Here is a 208-residue protein sequence, read N- to C-terminus: Orotidine 5'-phosphate decarboxylase (208 aa).

Substrate contacts are provided by residues D7, K29, D57–T66, S109, P162–K172, G185, and R186. K59 (proton donor) is an active-site residue.

Belongs to the OMP decarboxylase family. Type 1 subfamily. In terms of assembly, homodimer.

The enzyme catalyses orotidine 5'-phosphate + H(+) = UMP + CO2. Its pathway is pyrimidine metabolism; UMP biosynthesis via de novo pathway; UMP from orotate: step 2/2. Its function is as follows. Catalyzes the decarboxylation of orotidine 5'-monophosphate (OMP) to uridine 5'-monophosphate (UMP). This chain is Orotidine 5'-phosphate decarboxylase (pyrF), found in Pyrococcus horikoshii (strain ATCC 700860 / DSM 12428 / JCM 9974 / NBRC 100139 / OT-3).